The following is a 417-amino-acid chain: Serine hydroxymethyltransferase (417 aa).

Residues L121 and 125 to 127 (GHL) contribute to the (6S)-5,6,7,8-tetrahydrofolate site. Residue K229 is modified to N6-(pyridoxal phosphate)lysine. 355–357 (SSF) contacts (6S)-5,6,7,8-tetrahydrofolate.

The protein belongs to the SHMT family. As to quaternary structure, homodimer. Pyridoxal 5'-phosphate is required as a cofactor.

The protein localises to the cytoplasm. The catalysed reaction is (6R)-5,10-methylene-5,6,7,8-tetrahydrofolate + glycine + H2O = (6S)-5,6,7,8-tetrahydrofolate + L-serine. It functions in the pathway one-carbon metabolism; tetrahydrofolate interconversion. Its pathway is amino-acid biosynthesis; glycine biosynthesis; glycine from L-serine: step 1/1. Functionally, catalyzes the reversible interconversion of serine and glycine with tetrahydrofolate (THF) serving as the one-carbon carrier. This reaction serves as the major source of one-carbon groups required for the biosynthesis of purines, thymidylate, methionine, and other important biomolecules. Also exhibits THF-independent aldolase activity toward beta-hydroxyamino acids, producing glycine and aldehydes, via a retro-aldol mechanism. The protein is Serine hydroxymethyltransferase of Baumannia cicadellinicola subsp. Homalodisca coagulata.